Reading from the N-terminus, the 244-residue chain is Ferredoxin--NADP reductase B (244 aa).

The FAD-binding FR-type domain maps to 4-106; it reads AEPFEARLVA…VGPHGLFTRD (103 aa). FAD is bound by residues 55–58 and threonine 120; that span reads RAYS.

The protein belongs to the ferredoxin--NADP reductase type 1 family. The cofactor is FAD.

The enzyme catalyses 2 reduced [4Fe-4S]-[ferredoxin] + NADP(+) + H(+) = 2 oxidized [4Fe-4S]-[ferredoxin] + NADPH. Transports electrons between NADPH and ferredoxin. Can transfer electrons to ferredoxins Fdx2 and Fdx8. Prefers NADPH to NADH. In Sorangium cellulosum (strain So ce56) (Polyangium cellulosum (strain So ce56)), this protein is Ferredoxin--NADP reductase B.